We begin with the raw amino-acid sequence, 314 residues long: 4-hydroxy-3-methylbut-2-enyl diphosphate reductase (314 aa).

A [4Fe-4S] cluster-binding site is contributed by C12. Residues H41 and H74 each coordinate (2E)-4-hydroxy-3-methylbut-2-enyl diphosphate. Residues H41 and H74 each contribute to the dimethylallyl diphosphate site. Residues H41 and H74 each coordinate isopentenyl diphosphate. Position 96 (C96) interacts with [4Fe-4S] cluster. Residue H124 participates in (2E)-4-hydroxy-3-methylbut-2-enyl diphosphate binding. Residue H124 coordinates dimethylallyl diphosphate. H124 contributes to the isopentenyl diphosphate binding site. E126 functions as the Proton donor in the catalytic mechanism. Residue T167 coordinates (2E)-4-hydroxy-3-methylbut-2-enyl diphosphate. C197 contributes to the [4Fe-4S] cluster binding site. (2E)-4-hydroxy-3-methylbut-2-enyl diphosphate is bound by residues S225, S226, N227, and S269. The dimethylallyl diphosphate site is built by S225, S226, N227, and S269. Residues S225, S226, N227, and S269 each contribute to the isopentenyl diphosphate site.

The protein belongs to the IspH family. Requires [4Fe-4S] cluster as cofactor.

It carries out the reaction isopentenyl diphosphate + 2 oxidized [2Fe-2S]-[ferredoxin] + H2O = (2E)-4-hydroxy-3-methylbut-2-enyl diphosphate + 2 reduced [2Fe-2S]-[ferredoxin] + 2 H(+). It catalyses the reaction dimethylallyl diphosphate + 2 oxidized [2Fe-2S]-[ferredoxin] + H2O = (2E)-4-hydroxy-3-methylbut-2-enyl diphosphate + 2 reduced [2Fe-2S]-[ferredoxin] + 2 H(+). It functions in the pathway isoprenoid biosynthesis; dimethylallyl diphosphate biosynthesis; dimethylallyl diphosphate from (2E)-4-hydroxy-3-methylbutenyl diphosphate: step 1/1. The protein operates within isoprenoid biosynthesis; isopentenyl diphosphate biosynthesis via DXP pathway; isopentenyl diphosphate from 1-deoxy-D-xylulose 5-phosphate: step 6/6. Functionally, catalyzes the conversion of 1-hydroxy-2-methyl-2-(E)-butenyl 4-diphosphate (HMBPP) into a mixture of isopentenyl diphosphate (IPP) and dimethylallyl diphosphate (DMAPP). Acts in the terminal step of the DOXP/MEP pathway for isoprenoid precursor biosynthesis. This Idiomarina loihiensis (strain ATCC BAA-735 / DSM 15497 / L2-TR) protein is 4-hydroxy-3-methylbut-2-enyl diphosphate reductase.